Consider the following 477-residue polypeptide: Polyketide synthase-related protein Dhc1 (477 aa).

Residues 34–112 form the Carrier domain; that stretch reads EKMTVREGEL…AMTHCVFDRA (79 aa). S72 is modified (O-(pantetheine 4'-phosphoryl)serine). The interval 161–322 is ketoreductase (KR) domain; the sequence is LTGATSFLGS…AGEVFLENLV (162 aa). The disordered stretch occupies residues 410–435; that stretch reads VQQQQQQQQRQSQPPRDDAADGSPTE. Low complexity predominate over residues 411 to 422; it reads QQQQQQQQRQSQ. Residues 424–435 show a composition bias toward basic and acidic residues; sequence PRDDAADGSPTE.

It functions in the pathway mycotoxin biosynthesis. Its function is as follows. Polyketide synthase-related protein; part of the gene cluster that mediates the biosynthesis of 10,11-dehydrocurvularin, a prevalent fungal phytotoxin with heat shock response and immune-modulatory activities. The highly reducing polyketide synthase Dhc3 is responsible for biosynthesis up to the tetraketide stage. The non-reducing polyketide synthase Dhc5 then conducts four additional chain extension cycles, producing the unreduced part of the nascent octaketide from C-1 to C-8 in 10,11-dehydrocurvularin. The role of Dhc1 in 10,11-dehydrocurvularin biosynthesis has not been identified yet. The polypeptide is Polyketide synthase-related protein Dhc1 (Alternaria cinerariae).